Consider the following 237-residue polypeptide: tRNA (guanine-N(7)-)-methyltransferase (237 aa).

The tract at residues 1 to 24 (MTAHKPGDPTTLNRLYGRSKGKPL) is disordered. S-adenosyl-L-methionine-binding residues include Glu62, Glu87, Asp119, and Asp141. The active site involves Asp141. Substrate contacts are provided by residues Lys145, Asp177, and 216 to 219 (TRYE).

It belongs to the class I-like SAM-binding methyltransferase superfamily. TrmB family.

The enzyme catalyses guanosine(46) in tRNA + S-adenosyl-L-methionine = N(7)-methylguanosine(46) in tRNA + S-adenosyl-L-homocysteine. It functions in the pathway tRNA modification; N(7)-methylguanine-tRNA biosynthesis. Its function is as follows. Catalyzes the formation of N(7)-methylguanine at position 46 (m7G46) in tRNA. The protein is tRNA (guanine-N(7)-)-methyltransferase of Sphingopyxis alaskensis (strain DSM 13593 / LMG 18877 / RB2256) (Sphingomonas alaskensis).